Consider the following 476-residue polypeptide: Cysteine--tRNA ligase (476 aa).

Position 29 (cysteine 29) interacts with Zn(2+). The 'HIGH' region signature appears at 31-41 (PTVYDYTHIGH). Zn(2+) contacts are provided by cysteine 209, histidine 234, and glutamate 238. Residues 266–270 (KMSKS) carry the 'KMSKS' region motif. ATP is bound at residue lysine 269.

The protein belongs to the class-I aminoacyl-tRNA synthetase family. It depends on Zn(2+) as a cofactor.

It localises to the cytoplasm. It catalyses the reaction tRNA(Cys) + L-cysteine + ATP = L-cysteinyl-tRNA(Cys) + AMP + diphosphate. This Thermococcus kodakarensis (strain ATCC BAA-918 / JCM 12380 / KOD1) (Pyrococcus kodakaraensis (strain KOD1)) protein is Cysteine--tRNA ligase.